The sequence spans 206 residues: MIEIIGILILGYLLGSIPFALLVGKWGHGIDIRQHGSGNLGTTNTFRVLGKKAGIIVLIGDLGKGAVASLVPILLASELHPLFAGLAAVVGHIYPVFARFKGGKAVATSGGMLLVTSPILFLVLLISFLTTLRLSRMVSLSSIVSASIGIVAAITIGIVEQDWIVPTFFTILALFVIFKHRENISRIRQGTESKIGMFAKDKKDTD.

Helical transmembrane passes span 4–24 (IIGI…LLVG), 55–75 (IIVL…PILL), 78–98 (ELHP…PVFA), 112–132 (MLLV…LTTL), 137–157 (MVSL…ITIG), and 158–178 (IVEQ…FVIF).

This sequence belongs to the PlsY family. As to quaternary structure, probably interacts with PlsX.

It localises to the cell membrane. The enzyme catalyses an acyl phosphate + sn-glycerol 3-phosphate = a 1-acyl-sn-glycero-3-phosphate + phosphate. The protein operates within lipid metabolism; phospholipid metabolism. Functionally, catalyzes the transfer of an acyl group from acyl-phosphate (acyl-PO(4)) to glycerol-3-phosphate (G3P) to form lysophosphatidic acid (LPA). This enzyme utilizes acyl-phosphate as fatty acyl donor, but not acyl-CoA or acyl-ACP. This Exiguobacterium sibiricum (strain DSM 17290 / CCUG 55495 / CIP 109462 / JCM 13490 / 255-15) protein is Glycerol-3-phosphate acyltransferase.